The chain runs to 825 residues: NT-3 growth factor receptor (825 aa).

The first 31 residues, 1 to 31 (MDVSLCPAKCSFWRIFLLGSVWLDYVGSVLA), serve as a signal peptide directing secretion. Intrachain disulfides connect Cys-32-Cys-38 and Cys-36-Cys-45. The Extracellular segment spans residues 32–429 (CPANCVCSKT…TVTHKPEEDT (398 aa)). 3 N-linked (GlcNAc...) asparagine glycosylation sites follow: Asn-68, Asn-72, and Asn-79. 2 LRR repeats span residues 104 to 125 (GLQK…AFAK) and 128 to 149 (HLRY…LFQT). Asn-133 and Asn-163 each carry an N-linked (GlcNAc...) asparagine glycan. Residues 160 to 209 (NFFNCSCDIRWMQLWQEQGEAKLNSQSLYCISADGSQLPLFRMNISQCDL) enclose the LRRCT domain. 2 disulfide bridges follow: Cys-164/Cys-189 and Cys-166/Cys-207. Asn-203, Asn-218, Asn-232, Asn-259, Asn-267, Asn-272, and Asn-294 each carry an N-linked (GlcNAc...) asparagine glycan. Ig-like C2-type domains are found at residues 210–300 (PEIS…VALT) and 309–382 (SLEE…NRQE). Cys-231 and Cys-284 are oxidised to a cystine. A disulfide bridge links Cys-320 with Cys-362. N-linked (GlcNAc...) asparagine glycosylation is found at Asn-375 and Asn-388. The chain crosses the membrane as a helical span at residues 430–453 (FGVSIAVGLAAFACVLLVVLFIMI). Topologically, residues 454 to 825 (NKYGRRSKFG…ATPIYLDILG (372 aa)) are cytoplasmic. Tyr-516 is modified (phosphotyrosine; by autocatalysis). The Protein kinase domain occupies 538 to 814 (IVLKRELGEG…EIYKILHALG (277 aa)). ATP-binding positions include 544 to 552 (LGEGAFGKV) and Lys-572. Asp-679 serves as the catalytic Proton acceptor. Phosphotyrosine; by autocatalysis occurs at positions 705, 709, 710, and 820.

It belongs to the protein kinase superfamily. Tyr protein kinase family. Insulin receptor subfamily. Exists in a dynamic equilibrium between monomeric (low affinity) and dimeric (high affinity) structures. Binds SH2B2. Interacts with SQSTM1 and KIDINS220. Interacts with PTPRS. Interacts with MAPK8IP3/JIP3. In terms of processing, ligand-mediated auto-phosphorylation. In terms of tissue distribution, preferentially in the brain, low levels in the ovaries.

It is found in the membrane. It carries out the reaction L-tyrosyl-[protein] + ATP = O-phospho-L-tyrosyl-[protein] + ADP + H(+). Functionally, receptor tyrosine kinase involved in nervous system and probably heart development. Upon binding of its ligand NTF3/neurotrophin-3, NTRK3 autophosphorylates and activates different signaling pathways, including the phosphatidylinositol 3-kinase/AKT and the MAPK pathways, that control cell survival and differentiation. This Sus scrofa (Pig) protein is NT-3 growth factor receptor (NTRK3).